The chain runs to 552 residues: Sensor histidine kinase DpiB (552 aa).

At 1-21 the chain is on the cytoplasmic side; the sequence is MLQLNENKQFAFFQRLAFPLR. A helical membrane pass occupies residues 22-42; it reads IFLLILVFSIFVIAALAQYFT. At 43–182 the chain is on the periplasmic side; it reads ASFEDYLTLH…DSWRAEFLLP (140 aa). The chain crosses the membrane as a helical span at residues 183–203; that stretch reads MAGVFVVLLGILMLLSWFLAA. The Cytoplasmic segment spans residues 204-552; sequence HIRRQMMGME…NDSSINPIDR (349 aa). The PAS domain maps to 222–292; the sequence is RQQEALFSSV…IDEKRQDVVA (71 aa). One can recognise a Histidine kinase domain in the interval 344–541; that stretch reads TLRHEHLNWM…LFSIYIPKVK (198 aa). Phosphohistidine; by autocatalysis is present on H347.

In terms of processing, autophosphorylated.

The protein localises to the cell inner membrane. It catalyses the reaction ATP + protein L-histidine = ADP + protein N-phospho-L-histidine.. With respect to regulation, autophosphorylation is induced in vitro by dithiothreitol (DTT). Member of the two-component regulatory system DpiA/DpiB, which is essential for expression of citrate-specific fermentation genes and genes involved in plasmid inheritance. Could be involved in response to both the presence of citrate and external redox conditions. Functions as a sensor kinase that phosphorylates DpiA in the presence of citrate. In Escherichia coli (strain K12), this protein is Sensor histidine kinase DpiB (dpiB).